We begin with the raw amino-acid sequence, 393 residues long: NAD(P)H-quinone oxidoreductase subunit H, chloroplastic (393 aa).

It belongs to the complex I 49 kDa subunit family. NDH is composed of at least 16 different subunits, 5 of which are encoded in the nucleus.

Its subcellular location is the plastid. The protein localises to the chloroplast thylakoid membrane. It carries out the reaction a plastoquinone + NADH + (n+1) H(+)(in) = a plastoquinol + NAD(+) + n H(+)(out). The catalysed reaction is a plastoquinone + NADPH + (n+1) H(+)(in) = a plastoquinol + NADP(+) + n H(+)(out). In terms of biological role, NDH shuttles electrons from NAD(P)H:plastoquinone, via FMN and iron-sulfur (Fe-S) centers, to quinones in the photosynthetic chain and possibly in a chloroplast respiratory chain. The immediate electron acceptor for the enzyme in this species is believed to be plastoquinone. Couples the redox reaction to proton translocation, and thus conserves the redox energy in a proton gradient. This chain is NAD(P)H-quinone oxidoreductase subunit H, chloroplastic, found in Hordeum vulgare (Barley).